The primary structure comprises 256 residues: Acetyl-coenzyme A carboxylase carboxyl transferase subunit alpha (256 aa).

The CoA carboxyltransferase C-terminal domain occupies 1 to 236; that stretch reads MTDVARILKE…KLHLIDEITQ (236 aa).

This sequence belongs to the AccA family. As to quaternary structure, acetyl-CoA carboxylase is a heterohexamer composed of biotin carboxyl carrier protein (AccB), biotin carboxylase (AccC) and two subunits each of ACCase subunit alpha (AccA) and ACCase subunit beta (AccD).

Its subcellular location is the cytoplasm. The catalysed reaction is N(6)-carboxybiotinyl-L-lysyl-[protein] + acetyl-CoA = N(6)-biotinyl-L-lysyl-[protein] + malonyl-CoA. It functions in the pathway lipid metabolism; malonyl-CoA biosynthesis; malonyl-CoA from acetyl-CoA: step 1/1. Its function is as follows. Component of the acetyl coenzyme A carboxylase (ACC) complex. First, biotin carboxylase catalyzes the carboxylation of biotin on its carrier protein (BCCP) and then the CO(2) group is transferred by the carboxyltransferase to acetyl-CoA to form malonyl-CoA. The chain is Acetyl-coenzyme A carboxylase carboxyl transferase subunit alpha from Streptococcus equi subsp. zooepidemicus (strain H70).